Consider the following 942-residue polypeptide: Eukaryotic translation initiation factor 3 subunit A (942 aa).

One can recognise a PCI domain in the interval 320-494; the sequence is FKKYSSIILL…NTVTFFKDPF (175 aa). 4 coiled-coil regions span residues 499–529, 588–669, 705–734, and 821–912; these read KAAGTVEEEEEEEEEEGEEVEGEEAETGEEI, ITQT…KQRE, SKLSQDKSELEDRMTSSLQKLDHAERAYRK, and IEEV…RKAQ. The segment at 502-546 is disordered; it reads GTVEEEEEEEEEEGEEVEGEEAETGEEIVEEGEEHENEENKEPEP. The segment covering 504–538 has biased composition (acidic residues); sequence VEEEEEEEEEEGEEVEGEEAETGEEIVEEGEEHEN. 2 stretches are compositionally biased toward basic and acidic residues: residues 836 to 870 and 889 to 911; these read RKAEIEAEEREERAKKQEETARKQKEMEEAAERKS and RSAKLDEIARRQREIEQAAERKA. The segment at 836-942 is disordered; the sequence is RKAEIEAEER…KMKLRRASKK (107 aa).

Belongs to the eIF-3 subunit A family. Component of the eukaryotic translation initiation factor 3 (eIF-3) complex.

The protein localises to the cytoplasm. Its function is as follows. RNA-binding component of the eukaryotic translation initiation factor 3 (eIF-3) complex, which is involved in protein synthesis of a specialized repertoire of mRNAs and, together with other initiation factors, stimulates binding of mRNA and methionyl-tRNAi to the 40S ribosome. The eIF-3 complex specifically targets and initiates translation of a subset of mRNAs involved in cell proliferation. The sequence is that of Eukaryotic translation initiation factor 3 subunit A from Vanderwaltozyma polyspora (strain ATCC 22028 / DSM 70294 / BCRC 21397 / CBS 2163 / NBRC 10782 / NRRL Y-8283 / UCD 57-17) (Kluyveromyces polysporus).